Here is a 121-residue protein sequence, read N- to C-terminus: uncharacterized protein (121 aa).

Belongs to the HHV-5 UL30 protein family.

This is an uncharacterized protein from Human cytomegalovirus (strain AD169) (HHV-5).